The sequence spans 290 residues: 4-diphosphocytidyl-2-C-methyl-D-erythritol kinase (290 aa).

Lys10 is a catalytic residue. Position 95–105 (95–105 (PVAAGLAGGSS)) interacts with ATP. The active site involves Asp137.

This sequence belongs to the GHMP kinase family. IspE subfamily.

The enzyme catalyses 4-CDP-2-C-methyl-D-erythritol + ATP = 4-CDP-2-C-methyl-D-erythritol 2-phosphate + ADP + H(+). It participates in isoprenoid biosynthesis; isopentenyl diphosphate biosynthesis via DXP pathway; isopentenyl diphosphate from 1-deoxy-D-xylulose 5-phosphate: step 3/6. Catalyzes the phosphorylation of the position 2 hydroxy group of 4-diphosphocytidyl-2C-methyl-D-erythritol. This is 4-diphosphocytidyl-2-C-methyl-D-erythritol kinase from Geobacillus thermodenitrificans (strain NG80-2).